The following is a 406-amino-acid chain: Putative phosphate permease TK2061 (406 aa).

Transmembrane regions (helical) follow at residues 2 to 22 (AVMD…AWAI), 45 to 65 (AVLI…KSVT), 82 to 102 (TVLI…LVIA), 115 to 135 (IIGG…VNWG), 139 to 159 (QVVL…FLVF), 182 to 202 (FWIG…VLHG), 208 to 228 (GVLF…FLTL), 288 to 308 (VPVP…GVAT), 324 to 346 (LTNT…ASWL), and 385 to 405 (FVTV…LMIV).

It belongs to the inorganic phosphate transporter (PiT) (TC 2.A.20) family.

The protein resides in the cell membrane. Functionally, potential transporter for phosphate. This chain is Putative phosphate permease TK2061, found in Thermococcus kodakarensis (strain ATCC BAA-918 / JCM 12380 / KOD1) (Pyrococcus kodakaraensis (strain KOD1)).